The following is a 511-amino-acid chain: Ribonuclease Y (511 aa).

A helical transmembrane segment spans residues 2-22; sequence ITTVIIAIVCFAVGGGLSYML. The KH domain occupies 201 to 261; the sequence is SVTVFHIESD…VRREIARLAL (61 aa). Residues 327-420 enclose the HD domain; it reads LLQHARETAN…VQVCDAISGA (94 aa).

Belongs to the RNase Y family.

The protein resides in the cell membrane. Endoribonuclease that initiates mRNA decay. The polypeptide is Ribonuclease Y (Phocaeicola vulgatus (strain ATCC 8482 / DSM 1447 / JCM 5826 / CCUG 4940 / NBRC 14291 / NCTC 11154) (Bacteroides vulgatus)).